Here is a 257-residue protein sequence, read N- to C-terminus: Pyridoxine 5'-phosphate synthase (257 aa).

3-amino-2-oxopropyl phosphate is bound at residue N12. 14 to 15 is a 1-deoxy-D-xylulose 5-phosphate binding site; it reads DH. R23 serves as a coordination point for 3-amino-2-oxopropyl phosphate. The active-site Proton acceptor is the H48. Residues R50 and H55 each coordinate 1-deoxy-D-xylulose 5-phosphate. E75 (proton acceptor) is an active-site residue. T105 provides a ligand contact to 1-deoxy-D-xylulose 5-phosphate. Catalysis depends on H199, which acts as the Proton donor. 3-amino-2-oxopropyl phosphate-binding positions include G200 and 221-222; that span reads GH.

It belongs to the PNP synthase family. As to quaternary structure, homooctamer; tetramer of dimers.

It is found in the cytoplasm. It catalyses the reaction 3-amino-2-oxopropyl phosphate + 1-deoxy-D-xylulose 5-phosphate = pyridoxine 5'-phosphate + phosphate + 2 H2O + H(+). It participates in cofactor biosynthesis; pyridoxine 5'-phosphate biosynthesis; pyridoxine 5'-phosphate from D-erythrose 4-phosphate: step 5/5. In terms of biological role, catalyzes the complicated ring closure reaction between the two acyclic compounds 1-deoxy-D-xylulose-5-phosphate (DXP) and 3-amino-2-oxopropyl phosphate (1-amino-acetone-3-phosphate or AAP) to form pyridoxine 5'-phosphate (PNP) and inorganic phosphate. This is Pyridoxine 5'-phosphate synthase from Xanthobacter autotrophicus (strain ATCC BAA-1158 / Py2).